The chain runs to 249 residues: Putative nicotinamide mononucleotide adenylyltransferase (249 aa).

Serine 40 and phenylalanine 41 together coordinate NAD(+). Histidine 48 contributes to the ATP binding site. NAD(+) contacts are provided by threonine 97, glycine 129, aspartate 131, arginine 165, and asparagine 206. An ATP-binding site is contributed by 214–217 (TRAR).

Belongs to the eukaryotic NMN adenylyltransferase family. POF1 subfamily.

It localises to the cytoplasm. It is found in the nucleus. It carries out the reaction beta-nicotinamide D-ribonucleotide + ATP + H(+) = diphosphate + NAD(+). The protein operates within cofactor biosynthesis; NAD(+) biosynthesis; NAD(+) from nicotinamide D-ribonucleotide: step 1/1. Functionally, catalyzes the formation of NAD(+) from nicotinamide mononucleotide (NMN) and ATP. Involved in the salvage pathway for NAD(+) biosynthesis via NMN. In Schizosaccharomyces pombe (strain 972 / ATCC 24843) (Fission yeast), this protein is Putative nicotinamide mononucleotide adenylyltransferase.